A 216-amino-acid chain; its full sequence is Outer-membrane lipoprotein LolB (216 aa).

An N-terminal signal peptide occupies residues 1–24; the sequence is MNNLNYFTKISASCAALALMTLAG. Residue Cys-25 is the site of N-palmitoyl cysteine attachment. Cys-25 carries the S-diacylglycerol cysteine lipid modification.

The protein belongs to the LolB family. In terms of assembly, monomer.

It localises to the cell outer membrane. In terms of biological role, plays a critical role in the incorporation of lipoproteins in the outer membrane after they are released by the LolA protein. The protein is Outer-membrane lipoprotein LolB of Shewanella loihica (strain ATCC BAA-1088 / PV-4).